Consider the following 400-residue polypeptide: Nicotinate phosphoribosyltransferase (400 aa).

Histidine 220 bears the Phosphohistidine; by autocatalysis mark.

It belongs to the NAPRTase family. In terms of processing, transiently phosphorylated on a His residue during the reaction cycle. Phosphorylation strongly increases the affinity for substrates and increases the rate of nicotinate D-ribonucleotide production. Dephosphorylation regenerates the low-affinity form of the enzyme, leading to product release.

The enzyme catalyses nicotinate + 5-phospho-alpha-D-ribose 1-diphosphate + ATP + H2O = nicotinate beta-D-ribonucleotide + ADP + phosphate + diphosphate. It participates in cofactor biosynthesis; NAD(+) biosynthesis; nicotinate D-ribonucleotide from nicotinate: step 1/1. In terms of biological role, catalyzes the synthesis of beta-nicotinate D-ribonucleotide from nicotinate and 5-phospho-D-ribose 1-phosphate at the expense of ATP. This is Nicotinate phosphoribosyltransferase from Escherichia coli O127:H6 (strain E2348/69 / EPEC).